The chain runs to 517 residues: 2-isopropylmalate synthase (517 aa).

The Pyruvate carboxyltransferase domain maps to I5–H268. Mn(2+) contacts are provided by D14, H202, H204, and N238. Residues S393 to Q517 are regulatory domain.

The protein belongs to the alpha-IPM synthase/homocitrate synthase family. LeuA type 1 subfamily. As to quaternary structure, homodimer. The cofactor is Mn(2+).

The protein resides in the cytoplasm. The catalysed reaction is 3-methyl-2-oxobutanoate + acetyl-CoA + H2O = (2S)-2-isopropylmalate + CoA + H(+). The protein operates within amino-acid biosynthesis; L-leucine biosynthesis; L-leucine from 3-methyl-2-oxobutanoate: step 1/4. Its function is as follows. Catalyzes the condensation of the acetyl group of acetyl-CoA with 3-methyl-2-oxobutanoate (2-ketoisovalerate) to form 3-carboxy-3-hydroxy-4-methylpentanoate (2-isopropylmalate). The chain is 2-isopropylmalate synthase from Histophilus somni (strain 129Pt) (Haemophilus somnus).